A 279-amino-acid polypeptide reads, in one-letter code: Small ribosomal subunit protein uS2 (279 aa).

Belongs to the universal ribosomal protein uS2 family. As to quaternary structure, component of the small ribosomal subunit. Mature ribosomes consist of a small (40S) and a large (60S) subunit. The 40S subunit contains about 33 different proteins and 1 molecule of RNA (18S). The 60S subunit contains about 49 different proteins and 3 molecules of RNA (25S, 5.8S and 5S). Interacts with ribosomal protein S21.

It is found in the cytoplasm. In terms of biological role, required for the assembly and/or stability of the 40S ribosomal subunit. Required for the processing of the 20S rRNA-precursor to mature 18S rRNA in a late step of the maturation of 40S ribosomal subunits. The sequence is that of Small ribosomal subunit protein uS2 from Chlamydomonas reinhardtii (Chlamydomonas smithii).